A 294-amino-acid chain; its full sequence is N-acetylmuramic acid 6-phosphate etherase (294 aa).

The SIS domain occupies 54 to 217 (VIKSFEEEGR…STASMIGVGK (164 aa)). E82 (proton donor) is an active-site residue. E113 is an active-site residue.

The protein belongs to the GCKR-like family. MurNAc-6-P etherase subfamily. Homodimer.

It catalyses the reaction N-acetyl-D-muramate 6-phosphate + H2O = N-acetyl-D-glucosamine 6-phosphate + (R)-lactate. It functions in the pathway amino-sugar metabolism; N-acetylmuramate degradation. Functionally, specifically catalyzes the cleavage of the D-lactyl ether substituent of MurNAc 6-phosphate, producing GlcNAc 6-phosphate and D-lactate. This Bacillus cereus (strain B4264) protein is N-acetylmuramic acid 6-phosphate etherase.